An 804-amino-acid polypeptide reads, in one-letter code: Phenylalanine--tRNA ligase beta subunit (804 aa).

Positions 38-148 (RSSLKGFVIA…EDAPIGGLFA (111 aa)) constitute a tRNA-binding domain. The B5 domain occupies 401–476 (PEIKQIAFPF…RIYGLDKIEP (76 aa)). Mg(2+)-binding residues include Asp-454, Asp-460, Glu-463, and Glu-464. In terms of domain architecture, FDX-ACB spans 710 to 803 (SPFQMVRRDF…VTKATGAYLR (94 aa)).

This sequence belongs to the phenylalanyl-tRNA synthetase beta subunit family. Type 1 subfamily. In terms of assembly, tetramer of two alpha and two beta subunits. Mg(2+) serves as cofactor.

It localises to the cytoplasm. The enzyme catalyses tRNA(Phe) + L-phenylalanine + ATP = L-phenylalanyl-tRNA(Phe) + AMP + diphosphate + H(+). The chain is Phenylalanine--tRNA ligase beta subunit from Bartonella quintana (strain Toulouse) (Rochalimaea quintana).